Consider the following 535-residue polypeptide: uncharacterized protein (535 aa).

Transmembrane regions (helical) follow at residues 63–83 (LTGIVVALLVVTFAFPVPSIY), 90–110 (VTFGVAPAYATLALAIGTYWI), 143–163 (VAAVHLILWDIGGALLATLYG), 168–188 (VFVTIILFSVTICGVLVATNC), 226–246 (SLGSGVPVTGIATTALYVLLV), and 258–278 (VLILSITTLIFGFLVMWILAW). The region spanning 279 to 330 (LTAAPVRVVRAALKRVEQGDLRGDLVVFDGTELGELQRGFNAMVNGLRERER) is the HAMP domain. The 125-residue stretch at 362–486 (AVVFVDIVGS…KPVNQAARLC (125 aa)) folds into the Guanylate cyclase domain.

It belongs to the adenylyl cyclase class-3 family.

It is found in the cell membrane. This is an uncharacterized protein from Mycobacterium tuberculosis (strain ATCC 25618 / H37Rv).